Reading from the N-terminus, the 178-residue chain is Small ribosomal subunit protein uS4 (178 aa).

The S4 RNA-binding domain maps to 104-166 (RRLQTLVYRK…PNSPMALENH (63 aa)).

This sequence belongs to the universal ribosomal protein uS4 family. As to quaternary structure, part of the 30S ribosomal subunit. Contacts protein S5. The interaction surface between S4 and S5 is involved in control of translational fidelity.

Functionally, one of the primary rRNA binding proteins, it binds directly to 16S rRNA where it nucleates assembly of the body of the 30S subunit. Its function is as follows. With S5 and S12 plays an important role in translational accuracy. The polypeptide is Small ribosomal subunit protein uS4 (Methanococcus vannielii (strain ATCC 35089 / DSM 1224 / JCM 13029 / OCM 148 / SB)).